Reading from the N-terminus, the 100-residue chain is U12-ctenitoxin-Pn1a (100 aa).

An N-terminal signal peptide occupies residues 1–28 (MKYRIFKMKYTLLFLSVIALVHIFAVEA). The propeptide occupies 29 to 41 (KDEPESDALVPQE). 5 disulfides stabilise this stretch: Cys-44–Cys-58, Cys-51–Cys-64, Cys-57–Cys-82, Cys-66–Cys-80, and Cys-90–Cys-97.

This sequence belongs to the neurotoxin 09 (Tx3-6) family. In terms of tissue distribution, expressed by the venom gland.

It localises to the secreted. In terms of biological role, probable neurotoxin. This Phoneutria nigriventer (Brazilian armed spider) protein is U12-ctenitoxin-Pn1a.